We begin with the raw amino-acid sequence, 390 residues long: Scoulerine-9-O-methyltransferase 1 (390 aa).

E153 provides a ligand contact to substrate. S-adenosyl-L-methionine is bound by residues M207, S211, G235, D258, 278–279 (DM), and K292. The active-site Proton acceptor is H296. 296-297 (HD) lines the substrate pocket.

The protein belongs to the class I-like SAM-binding methyltransferase superfamily. Cation-independent O-methyltransferase family. COMT subfamily. As to quaternary structure, homodimer. Highly expressed in capsules. Expressed is stems. Expressed at low levels in roots.

It carries out the reaction (S)-scoulerine + S-adenosyl-L-methionine = (S)-tetrahydrocolumbamine + S-adenosyl-L-homocysteine + H(+). The catalysed reaction is (S)-tetrahydrocolumbamine + S-adenosyl-L-methionine = (S)-tetrahydropalmatine + S-adenosyl-L-homocysteine + H(+). It catalyses the reaction (S)-norreticuline + S-adenosyl-L-methionine = (S)-norcodamine + S-adenosyl-L-homocysteine + H(+). The enzyme catalyses (S)-reticuline + S-adenosyl-L-methionine = (S)-codamine + S-adenosyl-L-homocysteine + H(+). It participates in alkaloid biosynthesis. Functionally, methyltransferase involved in the biosynthesis of the benzylisoquinoline alkaloid noscapine. Catalyzes the conversion of (S)-scoulerine to (S)-tetrahydrocolumbamine. Can convert (S)-tetrahydrocolumbamine to tetrahydropalmatine. Can convert (S)-norreticuline to (S)-norcodamine. Can convert (S)-reticuline to (S)-codamine. Substrate preference is (S)-scoulerine &gt; (S)-tetrahydrocolumbamine &gt; (S)-norreticuline &gt; (S)-reticuline. The protein is Scoulerine-9-O-methyltransferase 1 of Papaver somniferum (Opium poppy).